The chain runs to 284 residues: Pantothenate synthetase (284 aa).

An ATP-binding site is contributed by 32 to 39 (MGALHDGH). The active-site Proton donor is the His-39. Gln-63 is a binding site for (R)-pantoate. Gln-63 contacts beta-alanine. 149–152 (GEKD) contacts ATP. Gln-155 serves as a coordination point for (R)-pantoate. ATP contacts are provided by residues Ile-178 and 186–189 (MSSR).

The protein belongs to the pantothenate synthetase family. As to quaternary structure, homodimer.

Its subcellular location is the cytoplasm. It catalyses the reaction (R)-pantoate + beta-alanine + ATP = (R)-pantothenate + AMP + diphosphate + H(+). It functions in the pathway cofactor biosynthesis; (R)-pantothenate biosynthesis; (R)-pantothenate from (R)-pantoate and beta-alanine: step 1/1. In terms of biological role, catalyzes the condensation of pantoate with beta-alanine in an ATP-dependent reaction via a pantoyl-adenylate intermediate. In Roseobacter denitrificans (strain ATCC 33942 / OCh 114) (Erythrobacter sp. (strain OCh 114)), this protein is Pantothenate synthetase.